Reading from the N-terminus, the 587-residue chain is Protein FRIGIDA-ESSENTIAL 1 (587 aa).

The C3H1-type zinc finger occupies 96–123 (KRAALPCKFFAKGWCFNGVSCKFLHVKE). Disordered stretches follow at residues 264–346 (DMGS…SFTI), 368–421 (GDRP…HQET), and 467–492 (IKPA…SDEI). Residues 294–304 (NGNSLSGSGSL) show a composition bias toward low complexity. The span at 470 to 479 (AGHDSWHRSD) shows a compositional bias: basic and acidic residues.

Component of the transcription activator complex FRI-C composed of FRI, FRL1, SUF4, FLX and FES1. Interacts with FLX, (via C-terminus) with FRI (via C-terminus), and with RIN1, a component of the SWR1 chromatin-remodeling complex. As to expression, expressed in root and shoot apices and vasculature.

The protein resides in the nucleus. Its function is as follows. Transcriptional activator involved in the FRIGIDA-mediated vernalization pathway, but not in the autonomous flowering pathway. Acts cooperatively with FRI (FRIGIDA) or FRL1 (FRIGIDA-LIKE 1) to promote FLC (FLOWERING LOCUS C) expression. Required for the stabilization of the FRI-C complex. The sequence is that of Protein FRIGIDA-ESSENTIAL 1 (FES1) from Arabidopsis thaliana (Mouse-ear cress).